The sequence spans 457 residues: ATP-dependent RNA helicase DbpA (457 aa).

A Q motif motif is present at residues 3-31 (AFSTLNVLPPAQLTNLNELGYLTMTPVQA). Residues 34 to 205 (LPAILAGKDV…GRVQRDPLAI (172 aa)) form the Helicase ATP-binding domain. An ATP-binding site is contributed by 47–54 (AKTGSGKT). Positions 153–156 (DEAD) match the DEAD box motif. Residues 230-376 (PLLQRLLSLH…QTPPANSSIA (147 aa)) form the Helicase C-terminal domain. An involved in 23S rRNA binding region spans residues 383–457 (ATLCIDGGKK…GKTCRVRLLK (75 aa)).

Belongs to the DEAD box helicase family. DbpA subfamily. Monomer.

The protein resides in the cytoplasm. It carries out the reaction ATP + H2O = ADP + phosphate + H(+). Requires hairpin 92 of 23S rRNA for optimal activity. ATPase activity is stimulated by interaction of the N-terminal domain with RNA. In terms of biological role, DEAD-box RNA helicase involved in the assembly of the 50S ribosomal subunit. Has an RNA-dependent ATPase activity, which is specific for 23S rRNA, and a 3' to 5' RNA helicase activity that uses the energy of ATP hydrolysis to destabilize and unwind short rRNA duplexes. Requires a single-stranded RNA loading site on the 3' side of the substrate helix. The chain is ATP-dependent RNA helicase DbpA from Escherichia coli (strain K12).